Here is a 711-residue protein sequence, read N- to C-terminus: Nuclear intron maturase 1, mitochondrial (711 aa).

The Reverse transcriptase domain occupies 147–459 (KDKISMNGGE…RGIQFLDHII (313 aa)). The intron maturase type-2 stretch occupies residues 484–653 (GTLLSVSASL…QVLQEYIRLQ (170 aa)).

This sequence belongs to the plant nuclear intron maturase (nMat) family. Expressed at low levels in seedlings and accumulates in adult plants.

The protein resides in the mitochondrion. In terms of biological role, nuclear-encoded maturase required for splicing of group-II introns in mitochondria. Necessary for mitochondrial biogenesis during early developmental stages. Involved in the splicing of mitochondrial NAD4 transcripts. Required for trans-splicing of NAD1 intron 1 and also functions in cis-splicing of NAD2 intron 1 and NAD4 intron 2. Required for the regulation of fundamental metabolic pathways such as amino acid metabolism, triacylglycerol degradation and polysaccharide synthesis (cellulose and starch) during the early stage of plant growth. Implicated in stress responses. The sequence is that of Nuclear intron maturase 1, mitochondrial from Arabidopsis thaliana (Mouse-ear cress).